We begin with the raw amino-acid sequence, 882 residues long: Alanine--tRNA ligase (882 aa).

The Zn(2+) site is built by H570, H574, C672, and H676.

Belongs to the class-II aminoacyl-tRNA synthetase family. Requires Zn(2+) as cofactor.

The protein localises to the cytoplasm. The enzyme catalyses tRNA(Ala) + L-alanine + ATP = L-alanyl-tRNA(Ala) + AMP + diphosphate. In terms of biological role, catalyzes the attachment of alanine to tRNA(Ala) in a two-step reaction: alanine is first activated by ATP to form Ala-AMP and then transferred to the acceptor end of tRNA(Ala). Also edits incorrectly charged Ser-tRNA(Ala) and Gly-tRNA(Ala) via its editing domain. This is Alanine--tRNA ligase from Xanthomonas campestris pv. campestris (strain 8004).